A 693-amino-acid chain; its full sequence is TBC1 domain family member 14 (693 aa).

S91 is modified (phosphoserine). Disordered regions lie at residues 108–130 and 271–304; these read PSCA…SSTF and NAQK…RKNL. A compositionally biased stretch (basic and acidic residues) spans 271–288; the sequence is NAQKDSKRIQKEYEDKAG. Phosphoserine is present on S295. The 211-residue stretch at 401 to 611 folds into the Rab-GAP TBC domain; sequence GIPPSVRGKV…RIWDVFCRDG (211 aa).

Interacts with ULK1. May interact with RAB11A and RAB11B, but does not exhibit any GTPase-activating activity toward these proteins. Interacts with TRAPPC8.

The protein localises to the golgi apparatus. Its subcellular location is the cis-Golgi network. It localises to the trans-Golgi network. Its function is as follows. Plays a role in the regulation of starvation-induced autophagosome formation. Together with the TRAPPIII complex, regulates a constitutive trafficking step from peripheral recycling endosomes to the early Golgi, maintaining the cycling pool of ATG9 required for initiation of autophagy. The chain is TBC1 domain family member 14 (TBC1D14) from Homo sapiens (Human).